The sequence spans 214 residues: Adenylate kinase (214 aa).

10-15 (GAGKGT) serves as a coordination point for ATP. The NMP stretch occupies residues 30-59 (STGDMLRAAIKAGTELGKQAKTLMDAGQLV). AMP-binding positions include Thr31, Arg36, 57–59 (QLV), 85–88 (GFPR), and Gln92. An LID region spans residues 122 to 159 (GRRVHPASGRSYHVVYNPPKVEGKDDVTGEDLIIRADD). Residues Arg123 and 132-133 (SY) contribute to the ATP site. Positions 156 and 167 each coordinate AMP. Gln200 is an ATP binding site.

The protein belongs to the adenylate kinase family. As to quaternary structure, monomer.

The protein resides in the cytoplasm. The enzyme catalyses AMP + ATP = 2 ADP. Its pathway is purine metabolism; AMP biosynthesis via salvage pathway; AMP from ADP: step 1/1. Catalyzes the reversible transfer of the terminal phosphate group between ATP and AMP. Plays an important role in cellular energy homeostasis and in adenine nucleotide metabolism. The polypeptide is Adenylate kinase (Actinobacillus succinogenes (strain ATCC 55618 / DSM 22257 / CCUG 43843 / 130Z)).